We begin with the raw amino-acid sequence, 389 residues long: Succinate--CoA ligase [ADP-forming] subunit beta (389 aa).

The region spanning 9 to 244 (KQLLAEYGIP…KTQEDPTEVI (236 aa)) is the ATP-grasp domain. ATP contacts are provided by residues K46, 53–55 (GRG), G102, and E107. N199 and D213 together coordinate Mg(2+). Substrate-binding positions include N264 and 321-323 (GIV).

Belongs to the succinate/malate CoA ligase beta subunit family. Heterotetramer of two alpha and two beta subunits. Requires Mg(2+) as cofactor.

It catalyses the reaction succinate + ATP + CoA = succinyl-CoA + ADP + phosphate. It carries out the reaction GTP + succinate + CoA = succinyl-CoA + GDP + phosphate. It participates in carbohydrate metabolism; tricarboxylic acid cycle; succinate from succinyl-CoA (ligase route): step 1/1. In terms of biological role, succinyl-CoA synthetase functions in the citric acid cycle (TCA), coupling the hydrolysis of succinyl-CoA to the synthesis of either ATP or GTP and thus represents the only step of substrate-level phosphorylation in the TCA. The beta subunit provides nucleotide specificity of the enzyme and binds the substrate succinate, while the binding sites for coenzyme A and phosphate are found in the alpha subunit. This is Succinate--CoA ligase [ADP-forming] subunit beta from Stenotrophomonas maltophilia (strain R551-3).